The chain runs to 446 residues: Exodeoxyribonuclease 7 large subunit (446 aa).

Belongs to the XseA family. As to quaternary structure, heterooligomer composed of large and small subunits.

The protein localises to the cytoplasm. It catalyses the reaction Exonucleolytic cleavage in either 5'- to 3'- or 3'- to 5'-direction to yield nucleoside 5'-phosphates.. In terms of biological role, bidirectionally degrades single-stranded DNA into large acid-insoluble oligonucleotides, which are then degraded further into small acid-soluble oligonucleotides. In Streptococcus pneumoniae (strain Hungary19A-6), this protein is Exodeoxyribonuclease 7 large subunit.